The following is a 369-amino-acid chain: Deoxyhypusine synthase (369 aa).

NAD(+) is bound by residues 105 to 109 (SNLIS), 131 to 133 (TAG), Glu-137, and Asp-238. 136 to 137 (EE) is a spermidine binding site. Asp-243 serves as a coordination point for spermidine. Gly-283 lines the NAD(+) pocket. His-288 serves as a coordination point for spermidine. Position 308–309 (308–309 (TA)) interacts with NAD(+). Spermidine-binding positions include 314–316 (GSD) and 323–329 (EAVSWGK). The Nucleophile role is filled by Lys-329. Residue 342–343 (DA) coordinates NAD(+).

Belongs to the deoxyhypusine synthase family. NAD(+) is required as a cofactor.

The enzyme catalyses [eIF5A protein]-L-lysine + spermidine = [eIF5A protein]-deoxyhypusine + propane-1,3-diamine. Its pathway is protein modification; eIF5A hypusination. Its function is as follows. Catalyzes the NAD-dependent oxidative cleavage of spermidine and the subsequent transfer of the butylamine moiety of spermidine to the epsilon-amino group of a critical lysine residue of the eIF-5A precursor protein to form the intermediate deoxyhypusine residue. This is the first step of the post-translational modification of that lysine into an unusual amino acid residue named hypusine. Hypusination is unique to mature eIF-5A factor and is essential for its function. This chain is Deoxyhypusine synthase (Dhps), found in Rattus norvegicus (Rat).